The primary structure comprises 125 residues: MSTIQQLVRKRRKKIKKKKKLAALDSCPQKKCICLKVHTITPKKPNSALRKVTRVKIISISKMFTTAYIPGIGHNLQEHSMVLIRGGRVKDLPGVKYKVIRGCLDAAGVKNRKNGRSKYGVKRPK.

Belongs to the universal ribosomal protein uS12 family. Part of the 30S ribosomal subunit.

The protein resides in the plastid. With S4 and S5 plays an important role in translational accuracy. Located at the interface of the 30S and 50S subunits. In Euglena longa (Euglenophycean alga), this protein is Small ribosomal subunit protein uS12c (rps12).